A 301-amino-acid polypeptide reads, in one-letter code: N-acetylmuramic acid 6-phosphate etherase (301 aa).

The SIS domain occupies 57 to 220 (VVERLRAGGR…STISMVRLGK (164 aa)). Catalysis depends on Glu-85, which acts as the Proton donor. Glu-116 is an active-site residue.

The protein belongs to the GCKR-like family. MurNAc-6-P etherase subfamily. Homodimer.

The catalysed reaction is N-acetyl-D-muramate 6-phosphate + H2O = N-acetyl-D-glucosamine 6-phosphate + (R)-lactate. Its pathway is amino-sugar metabolism; N-acetylmuramate degradation. Its function is as follows. Specifically catalyzes the cleavage of the D-lactyl ether substituent of MurNAc 6-phosphate, producing GlcNAc 6-phosphate and D-lactate. This Rubrobacter xylanophilus (strain DSM 9941 / JCM 11954 / NBRC 16129 / PRD-1) protein is N-acetylmuramic acid 6-phosphate etherase.